Here is an 89-residue protein sequence, read N- to C-terminus: Co-chaperonin GroES (89 aa).

Belongs to the GroES chaperonin family. Heptamer of 7 subunits arranged in a ring. Interacts with the chaperonin GroEL.

The protein localises to the cytoplasm. Functionally, together with the chaperonin GroEL, plays an essential role in assisting protein folding. The GroEL-GroES system forms a nano-cage that allows encapsulation of the non-native substrate proteins and provides a physical environment optimized to promote and accelerate protein folding. GroES binds to the apical surface of the GroEL ring, thereby capping the opening of the GroEL channel. This chain is Co-chaperonin GroES, found in Wolinella succinogenes (strain ATCC 29543 / DSM 1740 / CCUG 13145 / JCM 31913 / LMG 7466 / NCTC 11488 / FDC 602W) (Vibrio succinogenes).